The chain runs to 689 residues: Glycine--tRNA ligase beta subunit (689 aa).

This sequence belongs to the class-II aminoacyl-tRNA synthetase family. Tetramer of two alpha and two beta subunits.

The protein resides in the cytoplasm. It catalyses the reaction tRNA(Gly) + glycine + ATP = glycyl-tRNA(Gly) + AMP + diphosphate. The chain is Glycine--tRNA ligase beta subunit from Shewanella baltica (strain OS223).